The following is a 421-amino-acid chain: UDP-N-acetylglucosamine 1-carboxyvinyltransferase (421 aa).

Residue 22 to 23 participates in phosphoenolpyruvate binding; it reads KN. Arg-93 is a binding site for UDP-N-acetyl-alpha-D-glucosamine. Cys-117 (proton donor) is an active-site residue. 2-(S-cysteinyl)pyruvic acid O-phosphothioketal is present on Cys-117. Residues 122-126, Asp-308, and Ile-330 contribute to the UDP-N-acetyl-alpha-D-glucosamine site; that span reads RPVDL.

It belongs to the EPSP synthase family. MurA subfamily.

Its subcellular location is the cytoplasm. It catalyses the reaction phosphoenolpyruvate + UDP-N-acetyl-alpha-D-glucosamine = UDP-N-acetyl-3-O-(1-carboxyvinyl)-alpha-D-glucosamine + phosphate. It participates in cell wall biogenesis; peptidoglycan biosynthesis. In terms of biological role, cell wall formation. Adds enolpyruvyl to UDP-N-acetylglucosamine. The chain is UDP-N-acetylglucosamine 1-carboxyvinyltransferase from Pseudomonas syringae pv. tomato (strain ATCC BAA-871 / DC3000).